We begin with the raw amino-acid sequence, 453 residues long: Plasmepsin II (453 aa).

The Cytoplasmic segment spans residues Met1 to Lys37. A propeptide spanning residues Met1 to Gly124 is cleaved from the precursor. A helical; Signal-anchor for type II membrane protein membrane pass occupies residues Gly38–Val58. Over Tyr59–Leu453 the chain is Lumenal. Residues Phe140–Ala447 enclose the Peptidase A1 domain. Residue Asp158 is part of the active site. Cys171 and Cys176 form a disulfide bridge. The active site involves Asp338. Cysteines 373 and 409 form a disulfide.

The protein belongs to the peptidase A1 family. Component of the hemozoin formation complex (HFC) composed of falcipains FP2A and/or FP2B, plasmepsins PMII, PMIII/HAP and PMIV, heme detoxifying protein HDP and falcilysin FLN. The HFC complex is involved in hemoglobin degradation and detoxification of heme in the food vacuole during the asexual blood stage. In terms of processing, not N-glycosylated. Post-translationally, proteolytically cleaved into the soluble active mature form in the digestive vacuole by cysteine protease falcipains; the process begins at the early ring stage. Proteolysis requires an acidic environment. In absence of falcipains, autoprocessing may serve as an alternate activation system.

It is found in the membrane. It localises to the vacuole lumen. Its subcellular location is the vacuole membrane. It catalyses the reaction Hydrolysis of the bonds linking certain hydrophobic residues in hemoglobin or globin. Also cleaves small molecules substrates such as Ala-Leu-Glu-Arg-Thr-Phe-|-Phe(NO2)-Ser-Phe-Pro-Thr.. Inhibited by pepstatin A. During the asexual blood stage, participates in initial cleavage of native host hemoglobin (Hb) resulting in Hb denaturation. May cleave preferentially denatured hemoglobin that has been cleaved by PMI. Digestion of host Hb is an essential step which provides the parasite with amino acids for protein synthesis, and regulates osmolarity. The sequence is that of Plasmepsin II from Plasmodium falciparum (isolate HB3).